A 153-amino-acid polypeptide reads, in one-letter code: Phosphopantetheine adenylyltransferase (153 aa).

Position 11 (Ser-11) interacts with substrate. ATP contacts are provided by residues 11 to 12 (SF) and His-19. Substrate-binding residues include Lys-43, Thr-75, and Arg-89. ATP is bound by residues 90–92 (GIR), Glu-100, and 124–130 (LSFISSS).

It belongs to the bacterial CoaD family. Homohexamer. It depends on Mg(2+) as a cofactor.

It is found in the cytoplasm. The enzyme catalyses (R)-4'-phosphopantetheine + ATP + H(+) = 3'-dephospho-CoA + diphosphate. Its pathway is cofactor biosynthesis; coenzyme A biosynthesis; CoA from (R)-pantothenate: step 4/5. In terms of biological role, reversibly transfers an adenylyl group from ATP to 4'-phosphopantetheine, yielding dephospho-CoA (dPCoA) and pyrophosphate. The polypeptide is Phosphopantetheine adenylyltransferase (Porphyromonas gingivalis (strain ATCC 33277 / DSM 20709 / CIP 103683 / JCM 12257 / NCTC 11834 / 2561)).